A 314-amino-acid polypeptide reads, in one-letter code: DNA-directed RNA polymerase subunit alpha (314 aa).

An alpha N-terminal domain (alpha-NTD) region spans residues M1–T228. The segment at K245–E314 is alpha C-terminal domain (alpha-CTD).

It belongs to the RNA polymerase alpha chain family. As to quaternary structure, homodimer. The RNAP catalytic core consists of 2 alpha, 1 beta, 1 beta' and 1 omega subunit. When a sigma factor is associated with the core the holoenzyme is formed, which can initiate transcription.

The catalysed reaction is RNA(n) + a ribonucleoside 5'-triphosphate = RNA(n+1) + diphosphate. DNA-dependent RNA polymerase catalyzes the transcription of DNA into RNA using the four ribonucleoside triphosphates as substrates. This Shouchella clausii (strain KSM-K16) (Alkalihalobacillus clausii) protein is DNA-directed RNA polymerase subunit alpha.